The sequence spans 463 residues: Interferon-inducible GTPase 5 (463 aa).

Residues 52 to 234 form the IRG-type G domain; sequence TRLEVGVTGE…PMLVTTWEHD (183 aa). GTP is bound by residues 61–68, 86–90, 168–170, and 215–217; these read ESGAGKSS, TGVVE, KVD, and SNL. Phosphoserine is present on residues Ser-246 and Ser-303. The tract at residues 409–438 is disordered; sequence QGEVSLEAAGDNAVEKRSSGEGTSEEAPLS.

This sequence belongs to the TRAFAC class dynamin-like GTPase superfamily. IRG family.

It localises to the cell projection. Its subcellular location is the cilium. The protein resides in the flagellum. It is found in the lipid droplet. It carries out the reaction GTP + H2O = GDP + phosphate + H(+). Required for sperm motility and therefore male fertility, via positive regulation of spermatozoa fibrous sheath formation. This is Interferon-inducible GTPase 5 (Irgc) from Rattus norvegicus (Rat).